Consider the following 209-residue polypeptide: Large ribosomal subunit protein uL3 (209 aa).

The tract at residues 133-153 (THGNSLSHRVPGSIGQNQTPG) is disordered. Residue glutamine 150 is modified to N5-methylglutamine.

Belongs to the universal ribosomal protein uL3 family. As to quaternary structure, part of the 50S ribosomal subunit. Forms a cluster with proteins L14 and L19. In terms of processing, methylated by PrmB.

Its function is as follows. One of the primary rRNA binding proteins, it binds directly near the 3'-end of the 23S rRNA, where it nucleates assembly of the 50S subunit. This is Large ribosomal subunit protein uL3 from Pectobacterium carotovorum subsp. carotovorum (strain PC1).